Reading from the N-terminus, the 325-residue chain is Beta-lactamase 1 (325 aa).

The signal sequence occupies residues M1–G26. Positions G30–A50 are disordered. S93 (acyl-ester intermediate) is an active-site residue. K270 to G272 serves as a coordination point for substrate.

The protein belongs to the class-A beta-lactamase family.

The catalysed reaction is a beta-lactam + H2O = a substituted beta-amino acid. This Streptomyces cacaoi protein is Beta-lactamase 1 (blaL).